The following is a 342-amino-acid chain: 4-hydroxy-3-methylbut-2-enyl diphosphate reductase (342 aa).

Cysteine 47 lines the [4Fe-4S] cluster pocket. (2E)-4-hydroxy-3-methylbut-2-enyl diphosphate is bound by residues histidine 78 and histidine 111. Histidine 78 and histidine 111 together coordinate dimethylallyl diphosphate. The isopentenyl diphosphate site is built by histidine 78 and histidine 111. Cysteine 133 is a [4Fe-4S] cluster binding site. A (2E)-4-hydroxy-3-methylbut-2-enyl diphosphate-binding site is contributed by histidine 161. Histidine 161 contacts dimethylallyl diphosphate. Residue histidine 161 participates in isopentenyl diphosphate binding. The active-site Proton donor is glutamate 163. A (2E)-4-hydroxy-3-methylbut-2-enyl diphosphate-binding site is contributed by threonine 201. Cysteine 231 contributes to the [4Fe-4S] cluster binding site. The (2E)-4-hydroxy-3-methylbut-2-enyl diphosphate site is built by serine 259, serine 260, asparagine 261, and serine 303. Dimethylallyl diphosphate-binding residues include serine 259, serine 260, asparagine 261, and serine 303. Residues serine 259, serine 260, asparagine 261, and serine 303 each contribute to the isopentenyl diphosphate site.

It belongs to the IspH family. [4Fe-4S] cluster is required as a cofactor.

The enzyme catalyses isopentenyl diphosphate + 2 oxidized [2Fe-2S]-[ferredoxin] + H2O = (2E)-4-hydroxy-3-methylbut-2-enyl diphosphate + 2 reduced [2Fe-2S]-[ferredoxin] + 2 H(+). It catalyses the reaction dimethylallyl diphosphate + 2 oxidized [2Fe-2S]-[ferredoxin] + H2O = (2E)-4-hydroxy-3-methylbut-2-enyl diphosphate + 2 reduced [2Fe-2S]-[ferredoxin] + 2 H(+). It participates in isoprenoid biosynthesis; dimethylallyl diphosphate biosynthesis; dimethylallyl diphosphate from (2E)-4-hydroxy-3-methylbutenyl diphosphate: step 1/1. Its pathway is isoprenoid biosynthesis; isopentenyl diphosphate biosynthesis via DXP pathway; isopentenyl diphosphate from 1-deoxy-D-xylulose 5-phosphate: step 6/6. Its function is as follows. Catalyzes the conversion of 1-hydroxy-2-methyl-2-(E)-butenyl 4-diphosphate (HMBPP) into a mixture of isopentenyl diphosphate (IPP) and dimethylallyl diphosphate (DMAPP). Acts in the terminal step of the DOXP/MEP pathway for isoprenoid precursor biosynthesis. The protein is 4-hydroxy-3-methylbut-2-enyl diphosphate reductase of Anaplasma marginale (strain St. Maries).